The following is a 427-amino-acid chain: Serine--tRNA ligase (427 aa).

230 to 232 (TAE) provides a ligand contact to L-serine. Residue 261-263 (RAE) coordinates ATP. L-serine is bound at residue glutamate 284. Residue 348 to 351 (EISS) coordinates ATP. Serine 384 lines the L-serine pocket.

The protein belongs to the class-II aminoacyl-tRNA synthetase family. Type-1 seryl-tRNA synthetase subfamily. In terms of assembly, homodimer. The tRNA molecule binds across the dimer.

It is found in the cytoplasm. The enzyme catalyses tRNA(Ser) + L-serine + ATP = L-seryl-tRNA(Ser) + AMP + diphosphate + H(+). It catalyses the reaction tRNA(Sec) + L-serine + ATP = L-seryl-tRNA(Sec) + AMP + diphosphate + H(+). The protein operates within aminoacyl-tRNA biosynthesis; selenocysteinyl-tRNA(Sec) biosynthesis; L-seryl-tRNA(Sec) from L-serine and tRNA(Sec): step 1/1. Catalyzes the attachment of serine to tRNA(Ser). Is also able to aminoacylate tRNA(Sec) with serine, to form the misacylated tRNA L-seryl-tRNA(Sec), which will be further converted into selenocysteinyl-tRNA(Sec). The polypeptide is Serine--tRNA ligase (Syntrophomonas wolfei subsp. wolfei (strain DSM 2245B / Goettingen)).